The sequence spans 367 residues: DNA polymerase IV (367 aa).

The UmuC domain occupies 14 to 198; it reads IIHIDMDAFF…LPIAKFHGVG (185 aa). Positions 18 and 116 each coordinate Mg(2+). The active site involves glutamate 117.

It belongs to the DNA polymerase type-Y family. In terms of assembly, monomer. The cofactor is Mg(2+).

It localises to the cytoplasm. The catalysed reaction is DNA(n) + a 2'-deoxyribonucleoside 5'-triphosphate = DNA(n+1) + diphosphate. Poorly processive, error-prone DNA polymerase involved in untargeted mutagenesis. Copies undamaged DNA at stalled replication forks, which arise in vivo from mismatched or misaligned primer ends. These misaligned primers can be extended by PolIV. Exhibits no 3'-5' exonuclease (proofreading) activity. May be involved in translesional synthesis, in conjunction with the beta clamp from PolIII. This Streptococcus thermophilus (strain ATCC BAA-491 / LMD-9) protein is DNA polymerase IV.